The following is a 544-amino-acid chain: Chaperonin GroEL 1 (544 aa).

ATP contacts are provided by residues 29–32 (TLGP), 86–90 (DGTTT), Gly-413, and Asp-495.

Belongs to the chaperonin (HSP60) family. As to quaternary structure, forms a cylinder of 14 subunits composed of two heptameric rings stacked back-to-back. Interacts with the co-chaperonin GroES.

It localises to the cytoplasm. The enzyme catalyses ATP + H2O + a folded polypeptide = ADP + phosphate + an unfolded polypeptide.. Its function is as follows. Together with its co-chaperonin GroES, plays an essential role in assisting protein folding. The GroEL-GroES system forms a nano-cage that allows encapsulation of the non-native substrate proteins and provides a physical environment optimized to promote and accelerate protein folding. This is Chaperonin GroEL 1 from Synechococcus sp. (strain ATCC 27144 / PCC 6301 / SAUG 1402/1) (Anacystis nidulans).